The following is a 498-amino-acid chain: Glutamate--tRNA ligase (498 aa).

A 'HIGH' region motif is present at residues 11 to 21; it reads PSPTGHLHIGN. Residues 261–265 carry the 'KMSKS' region motif; that stretch reads KLSKR. ATP is bound at residue K264.

Belongs to the class-I aminoacyl-tRNA synthetase family. Glutamate--tRNA ligase type 1 subfamily. In terms of assembly, monomer.

It is found in the cytoplasm. The catalysed reaction is tRNA(Glu) + L-glutamate + ATP = L-glutamyl-tRNA(Glu) + AMP + diphosphate. Catalyzes the attachment of glutamate to tRNA(Glu) in a two-step reaction: glutamate is first activated by ATP to form Glu-AMP and then transferred to the acceptor end of tRNA(Glu). This chain is Glutamate--tRNA ligase, found in Oenococcus oeni (strain ATCC BAA-331 / PSU-1).